The chain runs to 517 residues: Fluconazole resistance protein 1 (517 aa).

Residues 26–52 (CDSCRIKKTKCDGKKPCNRCTLDNKIC) constitute a DNA-binding region (zn(2)-C6 fungal-type). Disordered regions lie at residues 106–137 (KSVD…QNST), 250–270 (SAQF…QQQQ), 284–307 (SDIE…PPTS), and 378–403 (GSIQ…VSSF). Residues 113 to 124 (SSPASSTPNSSS) show a composition bias toward low complexity. Residues 250-260 (SAQFSKGTFSP) show a composition bias toward polar residues. Residues 261–270 (QQQQLQQQQQ) are compositionally biased toward low complexity. The span at 298 to 307 (NSGSVSPPTS) shows a compositional bias: polar residues. Residues 388 to 398 (GSVHKPVRNHS) are compositionally biased toward basic residues.

It is found in the nucleus. Its function is as follows. Transcription factor that acts as a negative regulator of fluconazole resistance in C.albicans. Also confers fluconazole resistance in S.cerevisiae by activation of the PDR5 gene. The protein is Fluconazole resistance protein 1 (FCR1) of Candida albicans (Yeast).